We begin with the raw amino-acid sequence, 281 residues long: Elongation factor Ts (281 aa).

The involved in Mg(2+) ion dislocation from EF-Tu stretch occupies residues 80–83 (TDFV).

It belongs to the EF-Ts family.

It localises to the cytoplasm. Associates with the EF-Tu.GDP complex and induces the exchange of GDP to GTP. It remains bound to the aminoacyl-tRNA.EF-Tu.GTP complex up to the GTP hydrolysis stage on the ribosome. This chain is Elongation factor Ts, found in Vibrio campbellii (strain ATCC BAA-1116).